The primary structure comprises 203 residues: Endo-type membrane-bound lytic murein transglycosylase A (203 aa).

Residues 1-15 (MKLRWLLILVVFLAG) form the signal peptide. A lipid anchor (N-palmitoyl cysteine) is attached at Cys-16. Residue Cys-16 is the site of S-diacylglycerol cysteine attachment.

Belongs to the transglycosylase Slt family.

The protein resides in the cell outer membrane. The enzyme catalyses Endolytic cleavage of the (1-&gt;4)-beta-glycosidic linkage between N-acetylmuramic acid (MurNAc) and N-acetylglucosamine (GlcNAc) residues in peptidoglycan with concomitant formation of a 1,6-anhydrobond in the MurNAc residue.. Functionally, murein-degrading enzyme. May play a role in recycling of muropeptides during cell elongation and/or cell division. Preferentially cleaves at a distance of more than two disaccharide units from the ends of the glycan chain. The chain is Endo-type membrane-bound lytic murein transglycosylase A from Klebsiella pneumoniae subsp. pneumoniae (strain ATCC 700721 / MGH 78578).